Consider the following 321-residue polypeptide: Ribosomal RNA small subunit methyltransferase H (321 aa).

S-adenosyl-L-methionine is bound by residues Gly40–His42, Asp60, Phe84, Asp106, and Gln113.

The protein belongs to the methyltransferase superfamily. RsmH family.

It localises to the cytoplasm. The enzyme catalyses cytidine(1402) in 16S rRNA + S-adenosyl-L-methionine = N(4)-methylcytidine(1402) in 16S rRNA + S-adenosyl-L-homocysteine + H(+). Functionally, specifically methylates the N4 position of cytidine in position 1402 (C1402) of 16S rRNA. This chain is Ribosomal RNA small subunit methyltransferase H, found in Histophilus somni (strain 2336) (Haemophilus somnus).